The primary structure comprises 351 residues: Mitochondrial mRNA pseudouridine synthase RPUSD3 (351 aa).

The N-terminal 25 residues, 1–25, are a transit peptide targeting the mitochondrion; the sequence is MRAVLAREMDGRRVLGRFWSGWRRG. Positions 33-58 are disordered; that stretch reads EDAGFGTEARHQRQPRGSCQRSGPLG. Ser-71 is modified (phosphoserine).

This sequence belongs to the pseudouridine synthase RluA family. Forms a regulatory protein-RNA complex, consisting of RCC1L, NGRN, RPUSD3, RPUSD4, TRUB2, FASTKD2 and 16S mt-rRNA.

Its subcellular location is the mitochondrion matrix. It carries out the reaction a uridine in mRNA = a pseudouridine in mRNA. In terms of biological role, catalyzes uridine to pseudouridine isomerization (pseudouridylation) of specific mitochondrial mRNAs (mt-mRNAs), a post-transcriptional modification necessary for their translation. Acts at position 390 in COXI mt-mRNA and at position 697-699 in mitochondrial COXIII mt-mRNA. As a component of a functional protein-RNA module, consisting of RCC1L, NGRN, RPUSD3, RPUSD4, TRUB2, FASTKD2 and 16S mitochondrial ribosomal RNA (16S mt-rRNA), controls 16S mt-rRNA abundance and may play a role in mitochondrial ribosome biogenesis. This Homo sapiens (Human) protein is Mitochondrial mRNA pseudouridine synthase RPUSD3.